Here is a 512-residue protein sequence, read N- to C-terminus: Bifunctional pantoate ligase/cytidylate kinase (512 aa).

A pantoate--beta-alanine ligase region spans residues M1–R276. Residue M27–H34 participates in ATP binding. H34 acts as the Proton donor in catalysis. A (R)-pantoate-binding site is contributed by Q58. Beta-alanine is bound at residue Q58. G147–D150 provides a ligand contact to ATP. Q153 is a (R)-pantoate binding site. ATP-binding positions include L176 and L184 to R187. The segment at V277–A512 is cytidylate kinase.

It in the N-terminal section; belongs to the pantothenate synthetase family. This sequence in the C-terminal section; belongs to the cytidylate kinase family. Type 1 subfamily.

It localises to the cytoplasm. The enzyme catalyses (R)-pantoate + beta-alanine + ATP = (R)-pantothenate + AMP + diphosphate + H(+). The catalysed reaction is CMP + ATP = CDP + ADP. It catalyses the reaction dCMP + ATP = dCDP + ADP. It functions in the pathway cofactor biosynthesis; (R)-pantothenate biosynthesis; (R)-pantothenate from (R)-pantoate and beta-alanine: step 1/1. Its function is as follows. Catalyzes the condensation of pantoate with beta-alanine in an ATP-dependent reaction via a pantoyl-adenylate intermediate. Catalyzes the transfer of a phosphate group from ATP to either CMP or dCMP to form CDP or dCDP and ADP, respectively. The chain is Bifunctional pantoate ligase/cytidylate kinase from Synechococcus sp. (strain RCC307).